Reading from the N-terminus, the 325-residue chain is Transaldolase (325 aa).

Residue K125 is the Schiff-base intermediate with substrate of the active site.

It belongs to the transaldolase family. Type 2 subfamily.

Its subcellular location is the cytoplasm. It carries out the reaction D-sedoheptulose 7-phosphate + D-glyceraldehyde 3-phosphate = D-erythrose 4-phosphate + beta-D-fructose 6-phosphate. It functions in the pathway carbohydrate degradation; pentose phosphate pathway; D-glyceraldehyde 3-phosphate and beta-D-fructose 6-phosphate from D-ribose 5-phosphate and D-xylulose 5-phosphate (non-oxidative stage): step 2/3. Transaldolase is important for the balance of metabolites in the pentose-phosphate pathway. The polypeptide is Transaldolase (Campylobacter jejuni subsp. doylei (strain ATCC BAA-1458 / RM4099 / 269.97)).